Here is a 212-residue protein sequence, read N- to C-terminus: uncharacterized protein (212 aa).

Residues 97-151 form a disordered region; sequence SDASEAKNDDRRSDGRFALYSVSDTPETTTASRSADRSTNPKTAKHPKSAAKPTV. Residues 100-111 show a composition bias toward basic and acidic residues; it reads SEAKNDDRRSDG.

This is an uncharacterized protein from Mycobacterium tuberculosis (strain CDC 1551 / Oshkosh).